The primary structure comprises 335 residues: 3-hydroxyproline 2-epimerase (335 aa).

The Proton acceptor role is filled by cysteine 91. Substrate is bound by residues 92–93, aspartate 251, and 256–257; these read GH and GS.

The protein belongs to the proline racemase family.

It carries out the reaction trans-3-hydroxy-L-proline = cis-3-hydroxy-D-proline. The enzyme catalyses trans-4-hydroxy-L-proline = cis-4-hydroxy-D-proline. Functionally, catalyzes the epimerization of trans-3-hydroxy-L-proline (t3LHyp) to cis-3-hydroxy-D-proline (c3DHyp) in vitro. Can also catalyze the epimerization of trans-4-hydroxy-L-proline (t3LHyp) to cis-4-hydroxy-D-proline (c4DHyp), albeit with 3.6-fold lower efficiency. Displays no proline racemase activity. This chain is 3-hydroxyproline 2-epimerase, found in Burkholderia multivorans (strain ATCC 17616 / 249).